The sequence spans 170 residues: Probable T4-type lysozyme 2 (170 aa).

The active-site Proton donor is glutamate 13. Aspartate 22 (nucleophile) is an active-site residue.

It belongs to the glycosyl hydrolase 24 family.

It catalyses the reaction Hydrolysis of (1-&gt;4)-beta-linkages between N-acetylmuramic acid and N-acetyl-D-glucosamine residues in a peptidoglycan and between N-acetyl-D-glucosamine residues in chitodextrins.. In Dictyostelium discoideum (Social amoeba), this protein is Probable T4-type lysozyme 2.